The chain runs to 143 residues: Ninjurin-2 (143 aa).

Over 1–61 the chain is Extracellular; that stretch reads MESDRETIHL…KSVLQQGPFA (61 aa). Residues 26–38 form a helix alpha1 region; the sequence is NFYATKKSVAESM. The segment at 39–58 is helix alpha2; the sequence is LDVALFMSNAMRLKSVLQQG. A helical membrane pass occupies residues 62-93; the sequence is EYYTTLVTLIIVSLLLQVVISLLLVFIAILNL. Residues 94-97 are Cytoplasmic-facing; that stretch reads NEVE. The helical transmembrane segment at 98–127 threads the bilayer; it reads NQRHLNKLNNAATILVFITVVINIFITAFG. A cholesterol-binding site is contributed by K104. Residues 128-143 lie on the Extracellular side of the membrane; the sequence is AHHAASMAARTSSNPI.

The protein belongs to the ninjurin family. Homooligomer; in response to stimuli, homooligomerizes into filaments. In contrast to NINJ1, the filament is curved toward the intracellular space, preventing its circularization on a relatively flat membrane to mediate plasma membrane rupture: curvature is caused by cholesterol-binding at the cytoplasmic leaflet.

The protein localises to the cell membrane. Its function is as follows. Its role in unclear. In contrast to NINJ1 paralog, does not mediate plasma membrane rupture (cytolysis) downstream of necroptotic and pyroptotic programmed cell death. While it is able to oligomerize and form filaments, filaments are curved toward the intracellular space, preventing circularization to mediate plasma membrane rupture. May act as a homophilic transmembrane adhesion molecule involved in nerve regeneration. Promotes axonal growth. The polypeptide is Ninjurin-2 (Ninj2) (Mus musculus (Mouse)).